Consider the following 396-residue polypeptide: MAANLWLILGLLASHSSDLAAVREAPPTAVTTPIQNLHIDPAHYTLSWDPAPGADITTGAFCRKGRDIFVWADPGLARCSFQSLSLCHVTNFTVFLGKDRAVAGSIQFPPDDDGDHEAAAQDLRCWVHEGQLSCQWERGPKATGDVHYRMFWRDVRLGPAHNRECPHYHSLDVNTAGPAPHGGHEGCTLDLDTVLGSTPNSPDLVPQVTITVNGSGRAGPVPCMDNTVDLQRAEVLAPPTLTVECNGSEAHARWVARNRFHHGLLGYTLQVNQSSRSEPQEYNVSIPHFWVPNAGAISFRVKSRSEVYPRKLSSWSEAWGLVCPPEVMPVKTALVTSVATVLGAGLVAAGLLLWWRKSLLYRLCPPIPRLRLPLAGEMVVWEPALEDCEVTPVTDA.

The N-terminal stretch at 1-16 (MAANLWLILGLLASHS) is a signal peptide. Over 17-331 (SDLAAVREAP…VCPPEVMPVK (315 aa)) the chain is Extracellular. 5 cysteine pairs are disulfide-bonded: C62-C79, C87-C223, C125-C134, C165-C187, and C245-C323. N91 carries N-linked (GlcNAc...) asparagine glycosylation. Residues N213, N246, N272, and N283 are each glycosylated (N-linked (GlcNAc...) asparagine). The short motif at 312–316 (LSSWS) is the WSXWS motif element. A helical membrane pass occupies residues 332 to 355 (TALVTSVATVLGAGLVAAGLLLWW). The Cytoplasmic portion of the chain corresponds to 356–396 (RKSLLYRLCPPIPRLRLPLAGEMVVWEPALEDCEVTPVTDA). K357 is covalently cross-linked (Glycyl lysine isopeptide (Lys-Gly) (interchain with G-Cter in ubiquitin)). The short motif at 363-371 (LCPPIPRLR) is the Box 1 motif element.

The protein belongs to the type I cytokine receptor family. Type 5 subfamily. Interacts with IL3. Heterodimer of an alpha and a beta subunit. The beta subunit is common to the IL3, IL5 and GM-CSF receptors. In terms of processing, ubiquitinated at Lys-357 by RNFT2 in response to IL3. Ubiquitination leads ligand-induced degradation by the proteasome. Ubiquitinated by RNF128 via 'Lys-27'-linked polyubiquitination, facilitating its degradation through the lysosomal pathway.

Its subcellular location is the cell membrane. It localises to the endomembrane system. Its function is as follows. Cell surface receptor for IL3 expressed on hematopoietic progenitor cells, monocytes and B-lymphocytes that controls the production and differentiation of hematopoietic progenitor cells into lineage-restricted cells. Ligand stimulation rapidly induces hetrodimerization with IL3RB, phosphorylation and enzyme activity of effector proteins such as JAK2 and PI3K that play a role in signaling cell proliferation and differentiation. Activation of JAK2 leads to STAT5-mediated transcriptional program. This chain is Interleukin-3 receptor subunit alpha (Il3ra), found in Mus musculus (Mouse).